Here is a 351-residue protein sequence, read N- to C-terminus: Ca(2+)/H(+) antiporter ChaA (351 aa).

A run of 11 helical transmembrane segments spans residues 4-24, 25-45, 59-79, 86-106, 130-150, 156-176, 205-225, 241-261, 282-302, 303-323, and 331-351; these read IFFILVAAGVPLSVIGSLMHW, PSAVLFAVYCVTIIALASYMG, IGGLLNATFGNAVELIISLFA, GIVLASLTGSVLGNLLLVAGL, GLLIFAIIVAFVIPEVFSVGM, LNLSIGISIIMILLYVAALYF, VATIVLFAATIVVAYISENLV, FIGVIIVAIVGNAAEHASAII, IAMFVAPVLVICSIFFPTSMP, LVFTLPELVAMVSAVLLMIAI, and WFEGATLLAAYVIMAIGFFLL.

This sequence belongs to the Ca(2+):cation antiporter (CaCA) (TC 2.A.19) family. Cation/proton exchanger (CAX) subfamily. As to quaternary structure, homotrimer.

The protein resides in the cell membrane. With respect to regulation, calcium efflux is tightly regulated by intracellular pH. Functionally, ca(+)/H(+) antiporter that extrudes calcium in exchange for external protons. Does not transport sodium or potassium. In Bacillus subtilis (strain 168), this protein is Ca(2+)/H(+) antiporter ChaA (chaA).